A 244-amino-acid chain; its full sequence is tRNA (guanine-N(1)-)-methyltransferase (244 aa).

Residues Gly111 and 130 to 135 contribute to the S-adenosyl-L-methionine site; that span reads IGDYVL.

The protein belongs to the RNA methyltransferase TrmD family. As to quaternary structure, homodimer.

The protein localises to the cytoplasm. It catalyses the reaction guanosine(37) in tRNA + S-adenosyl-L-methionine = N(1)-methylguanosine(37) in tRNA + S-adenosyl-L-homocysteine + H(+). In terms of biological role, specifically methylates guanosine-37 in various tRNAs. The sequence is that of tRNA (guanine-N(1)-)-methyltransferase from Phytoplasma australiense.